The chain runs to 259 residues: Aliphatic sulfonates import ATP-binding protein SsuB 2 (259 aa).

The ABC transporter domain maps to 17–238 (LDILGLWKGF…VRSSQAFTSI (222 aa)). Residue 49-56 (GRSGCGKS) participates in ATP binding.

Belongs to the ABC transporter superfamily. Aliphatic sulfonates importer (TC 3.A.1.17.2) family. The complex is composed of two ATP-binding proteins (SsuB), two transmembrane proteins (SsuC) and a solute-binding protein (SsuA).

The protein resides in the cell inner membrane. The enzyme catalyses ATP + H2O + aliphatic sulfonate-[sulfonate-binding protein]Side 1 = ADP + phosphate + aliphatic sulfonateSide 2 + [sulfonate-binding protein]Side 1.. In terms of biological role, part of the ABC transporter complex SsuABC involved in aliphatic sulfonates import. Responsible for energy coupling to the transport system. The polypeptide is Aliphatic sulfonates import ATP-binding protein SsuB 2 (Agrobacterium fabrum (strain C58 / ATCC 33970) (Agrobacterium tumefaciens (strain C58))).